The chain runs to 512 residues: ADP,ATP carrier protein 4 (512 aa).

Helical transmembrane passes span 34–54 (ISKF…QNLI), 71–91 (ISFL…VMYV), 102–122 (IFYL…YVIF), 157–177 (FSLF…LLFW), 192–212 (FYPL…HFLE), 231–251 (FHTL…IVSI), 296–316 (LIAT…GPWK), 330–350 (AAFI…FVLL), 361–381 (FTSA…FFAF), 390–410 (LIIA…IGAI), 448–468 (VIGT…IFII), and 476–496 (SISI…IWAT).

Belongs to the ADP/ATP translocase tlc family.

The protein localises to the cell membrane. Its function is as follows. Provides the rickettsial cell with host ATP in exchange for rickettsial ADP. This is an obligate exchange system. This energy acquiring activity is an important component of rickettsial parasitism. This Rickettsia typhi (strain ATCC VR-144 / Wilmington) protein is ADP,ATP carrier protein 4 (tlcD).